The following is a 230-amino-acid chain: N-(5'-phosphoribosyl)anthranilate isomerase (230 aa).

The protein belongs to the TrpF family.

The enzyme catalyses N-(5-phospho-beta-D-ribosyl)anthranilate = 1-(2-carboxyphenylamino)-1-deoxy-D-ribulose 5-phosphate. It functions in the pathway amino-acid biosynthesis; L-tryptophan biosynthesis; L-tryptophan from chorismate: step 3/5. The sequence is that of N-(5'-phosphoribosyl)anthranilate isomerase from Trichodesmium erythraeum (strain IMS101).